We begin with the raw amino-acid sequence, 495 residues long: Potassium voltage-gated channel subfamily A member 1 (495 aa).

The disordered stretch occupies residues 1–30 (MTVMSGENADEASTAPGHPQDGSYPRQADH). A tetramerization domain region spans residues 1 to 128 (MTVMSGENAD…FYELGEEAME (128 aa)). At 1 to 164 (MTVMSGENAD…LLFEYPESSG (164 aa)) the chain is on the cytoplasmic side. Serine 23 is modified (phosphoserine). A helical membrane pass occupies residues 165–186 (PARVIAIVSVMVILISIVIFCL). Residues 187–220 (ETLPELKDDKDFTGTIHRIDNTTVIYTSNIFTDP) lie on the Extracellular side of the membrane. Asparagine 207 carries an N-linked (GlcNAc...) asparagine glycan. The chain crosses the membrane as a helical span at residues 221–242 (FFIVETLCIIWFSFELVVRFFA). A lipid anchor (S-palmitoyl cysteine) is attached at cysteine 243. The Cytoplasmic portion of the chain corresponds to 243 to 253 (CPSKTDFFKNI). Residues 254-274 (MNFIDIVAIIPYFITLGTEIA) form a helical membrane-spanning segment. The Extracellular portion of the chain corresponds to 275–287 (EQEGNQKGEQATS). Residues 288 to 308 (LAILRVIRLVRVFRIFKLSRH) form a helical; Voltage-sensor membrane-spanning segment. Residues 309–323 (SKGLQILGQTLKASM) lie on the Cytoplasmic side of the membrane. The segment at 310–323 (KGLQILGQTLKASM) is S4-S5 linker. Serine 322 is subject to Phosphoserine; by PKA. The chain crosses the membrane as a helical span at residues 324 to 345 (RELGLLIFFLFIGVILFSSAVY). The Extracellular portion of the chain corresponds to 346 to 359 (FAEAEEAESHFSSI). Positions 360–371 (PDAFWWAVVSMT) form an intramembrane region, helical. A Selectivity filter motif is present at residues 372 to 377 (TVGYGD). An intramembrane segment occupies 372–379 (TVGYGDMY). The Extracellular portion of the chain corresponds to 380 to 386 (PVTIGGK). The chain crosses the membrane as a helical span at residues 387–415 (IVGSLCAIAGVLTIALPVPVIVSNFNYFY). The Cytoplasmic portion of the chain corresponds to 416–495 (HRETEGEEQA…VNKSKLLTDV (80 aa)). Serine 437 and serine 439 each carry phosphoserine. Serine 446 is subject to Phosphoserine; by PKA. Residues 493–495 (TDV) carry the PDZ-binding motif.

Belongs to the potassium channel family. A (Shaker) (TC 1.A.1.2) subfamily. Kv1.1/KCNA1 sub-subfamily. Homotetramer and heterotetramer with other channel-forming alpha subunits, such as KCNA2, KCNA4, KCNA5, KCNA6 and KCNA7. Channel activity is regulated by interaction with the beta subunits KCNAB1 and KCNAB2. Identified in a complex with KCNA2 and KCNAB2. Interacts (via C-terminus) with the PDZ domains of DLG1, DLG2 and DLG4. Interacts with LGI1 within a complex containing LGI1, KCNA4 and KCNAB1. Interacts (via N-terminus) with STX1A; this promotes channel inactivation. Interacts (via N-terminus) with the heterodimer formed by GNB1 and GNG2; this promotes channel inactivation. Can interact simultaneously with STX1A and the heterodimer formed by GNB1 and GNG2. Interacts (via cytoplasmic N-terminal domain) with KCNRG; this inhibits channel activity. Interacts with ANK3; this inhibits channel activity. Interacts with ADAM11. In terms of processing, N-glycosylated. Palmitoylated on Cys-243; which may be required for membrane targeting. Post-translationally, phosphorylated on tyrosine residues. Phosphorylation increases in response to NRG1; this inhibits channel activity. Phosphorylation at Ser-446 regulates channel activity by down-regulating expression at the cell membrane. As to expression, detected in brain. Expressed in cerebellar cortex basket cell terminals, the area surround the Purkinje cell soma, and the pinceaux expansions encircling the axon initial segment (at protein level). Detected in the juxtaparanodal regions of the nodes of Ranvier in myelinated axons. Detected in the paranodal region in sciatic nerve. Detected on cell bodies in cerebellum, dorsal and ventral cochlear nucleus, pontine reticular nucleus, mesencephalic trigeminal nucleus, motor trigeminal nucleus and the pricipal sensory trigeminal nucleus. Detected in terminal fields of basket cells in the cerebellum corpus medullare. Detected in hippocampus CA3 pyramidal neurons and in the hilus and stratum moleculare of the dentate gyrus. Detected in the central nucleus and the external nucleus of the inferior colliculus. Detected in fiber tracts in the optic tract, external medullary lamina, stria terminalis, medulla, ventral pallidum and substantia nigra. Detected in neurons from dorsal root ganglion. Detected in neurons in the medial nucleus of the trapezoid body. Detected in midbrain dopamine neuron axon terminals. Detected in brain cortex. Detected in brainstem. Detected in juxtaparanodal regions of the nodes of Ranvier in the vagus nerve, but only at very low levels in the heart. Detected in the islet of Langerhans. Detected at the luminal membrane in distal convoluted tubules in the kidney (at protein level). Detected in hippocampus, thalamus, neocortex and ventral brain cortex, including the piriform and entorhinal cortex and the amygdala. Detected in midbrain dopamine neurons. Detected in heart atrium, ventricle, sinoatrial node and atrioventricular node.

The protein resides in the cell membrane. The protein localises to the cell projection. Its subcellular location is the axon. It localises to the membrane. It is found in the perikaryon. The protein resides in the dendrite. The protein localises to the cell junction. Its subcellular location is the synapse. It localises to the cytoplasmic vesicle. It is found in the endoplasmic reticulum. The protein resides in the presynaptic cell membrane. The protein localises to the presynapse. It carries out the reaction K(+)(in) = K(+)(out). With respect to regulation, inhibited by 4-aminopyridine (4-AP), tetraethylammonium (TEA) and dendrotoxin (DTX), but not by charybdotoxin (CTX). Voltage-gated potassium channel that mediates transmembrane potassium transport in excitable membranes, primarily in the brain and the central nervous system, but also in the kidney. Contributes to the regulation of the membrane potential and nerve signaling, and prevents neuronal hyperexcitability. Forms tetrameric potassium-selective channels through which potassium ions pass in accordance with their electrochemical gradient. The channel alternates between opened and closed conformations in response to the voltage difference across the membrane. Can form functional homotetrameric channels and heterotetrameric channels that contain variable proportions of KCNA1, KCNA2, KCNA4, KCNA5, KCNA6, KCNA7, and possibly other family members as well; channel properties depend on the type of alpha subunits that are part of the channel. Channel properties are modulated by cytoplasmic beta subunits that regulate the subcellular location of the alpha subunits and promote rapid inactivation of delayed rectifier potassium channels. In vivo, membranes probably contain a mixture of heteromeric potassium channel complexes, making it difficult to assign currents observed in intact tissues to any particular potassium channel family member. Homotetrameric KCNA1 forms a delayed-rectifier potassium channel that opens in response to membrane depolarization, followed by slow spontaneous channel closure. In contrast, a heterotetrameric channel formed by KCNA1 and KCNA4 shows rapid inactivation. Regulates neuronal excitability in hippocampus, especially in mossy fibers and medial perforant path axons, preventing neuronal hyperexcitability. May function as down-stream effector for G protein-coupled receptors and inhibit GABAergic inputs to basolateral amygdala neurons. May contribute to the regulation of neurotransmitter release, such as gamma-aminobutyric acid (GABA) release. Plays a role in regulating the generation of action potentials and preventing hyperexcitability in myelinated axons of the vagus nerve, and thereby contributes to the regulation of heart contraction. Required for normal neuromuscular responses. Regulates the frequency of neuronal action potential firing in response to mechanical stimuli, and plays a role in the perception of pain caused by mechanical stimuli, but does not play a role in the perception of pain due to heat stimuli. Required for normal responses to auditory stimuli and precise location of sound sources, but not for sound perception. The use of toxins that block specific channels suggest that it contributes to the regulation of the axonal release of the neurotransmitter dopamine. Required for normal postnatal brain development and normal proliferation of neuronal precursor cells in the brain. Plays a role in the reabsorption of Mg(2+) in the distal convoluted tubules in the kidney and in magnesium ion homeostasis, probably via its effect on the membrane potential. The sequence is that of Potassium voltage-gated channel subfamily A member 1 from Mus musculus (Mouse).